We begin with the raw amino-acid sequence, 601 residues long: Aspartate--tRNA(Asp/Asn) ligase (601 aa).

Glu-174 is an L-aspartate binding site. The tract at residues 198–201 (QLFK) is aspartate. L-aspartate is bound at residue Arg-220. Residues 220-222 (RDE) and Gln-229 contribute to the ATP site. Residue His-459 coordinates L-aspartate. Glu-493 is a binding site for ATP. Arg-500 provides a ligand contact to L-aspartate. 545-548 (GLDR) contacts ATP.

It belongs to the class-II aminoacyl-tRNA synthetase family. Type 1 subfamily. As to quaternary structure, homodimer.

The protein localises to the cytoplasm. It catalyses the reaction tRNA(Asx) + L-aspartate + ATP = L-aspartyl-tRNA(Asx) + AMP + diphosphate. In terms of biological role, aspartyl-tRNA synthetase with relaxed tRNA specificity since it is able to aspartylate not only its cognate tRNA(Asp) but also tRNA(Asn). Reaction proceeds in two steps: L-aspartate is first activated by ATP to form Asp-AMP and then transferred to the acceptor end of tRNA(Asp/Asn). This is Aspartate--tRNA(Asp/Asn) ligase from Variovorax paradoxus (strain S110).